Consider the following 435-residue polypeptide: Light-independent protochlorophyllide reductase subunit N (435 aa).

The [4Fe-4S] cluster site is built by cysteine 23, cysteine 48, and cysteine 108.

This sequence belongs to the BchN/ChlN family. In terms of assembly, protochlorophyllide reductase is composed of three subunits; ChlL, ChlN and ChlB. Forms a heterotetramer of two ChlB and two ChlN subunits. Requires [4Fe-4S] cluster as cofactor.

The protein localises to the plastid. It is found in the chloroplast. It catalyses the reaction chlorophyllide a + oxidized 2[4Fe-4S]-[ferredoxin] + 2 ADP + 2 phosphate = protochlorophyllide a + reduced 2[4Fe-4S]-[ferredoxin] + 2 ATP + 2 H2O. It functions in the pathway porphyrin-containing compound metabolism; chlorophyll biosynthesis (light-independent). Functionally, component of the dark-operative protochlorophyllide reductase (DPOR) that uses Mg-ATP and reduced ferredoxin to reduce ring D of protochlorophyllide (Pchlide) to form chlorophyllide a (Chlide). This reaction is light-independent. The NB-protein (ChlN-ChlB) is the catalytic component of the complex. This is Light-independent protochlorophyllide reductase subunit N from Chlorella vulgaris (Green alga).